Here is a 1026-residue protein sequence, read N- to C-terminus: MSTIVFGSFTCHLDAAIHQDNADRLAKAWTRPENRQVSNVHLLCRRAAKSLINTYESATASAWKGLEEKLQPMFAKREFSKTVTKRKGLRCFKESSEKFIEKKLKKQYKEERERFQFLNGPDAIVNQISVDKCEASVWVPFPHIIEKPSFTTPSMKKKVVFTKVRMSEASLQLFMRRVAANAKANGQKVEIIGRKRVVGHYTTKSRLTYFRTHVRHLDGSKPRYDLVLDEATKKILQLFANTSGFHHVHKKGEITPGMSGFVVNPMNLSDPMHVYDTDLFIVRGKHNSILVDSRCKVSKEQSNEIVHYSDPGKQFWDGFTNSFMQCKLRETDHQCTSDLDVKECGYVAALVCQAIIPCGKITCLQCAQKYSYMSQQEIRDRFSTVIEQHEKTVMDNYPQFSHVLAFLKRYRELMRVENQNYEAFKDITHMIGERKEAPFSHLNKINELIIKGGMMSAQDYIEASDHLRELARYQKNRTENIRSGSIKAFRNKISSKAHVNMQLMCDNQLDTNGNFVWGQREYHAKRFFRNYFDVIDVSEGYRRHIVRENPRGIRKLAIGNLVMSTNLAALRKQLLGEECIHFEVSKECTSKRGENFVYQCCCVTHEDGTPLESEIISPTKNHLVVGNSGDSKYVDLPTAKGGAMFIAKAGYCYINIFLAMLININEDEAKSFTKTVRDTIVPKLGTWPSMMDLATACHFLAVLYPETRNAELPRILVDHEAKIFHVVDSFGSLSTGMHVLKANTINQLISFASDTLDSSMKTYLVGGLEVDKCDEFKNVKLLIRSIYKPQIMEQVLKEEPYLLLMSVLSPGVLMALFNSGSLEKATQYWIARSHSLAAITAMLSALAAKVSLASTLNAQMSVIDEHAAVLCDSVFVGTKPYASYMMAVKTLERMKARTESDHTLNDLGFSVLRQATPHLVEKKLSPGVGAGLERIKLVGKVLCNLGIAAVAKTYTKTFHPERRSRFRRQVRHLRSVITWQPIQTPERRSSAEKRRRCLLHTPVDGKAILQSYRNFHKFSSKHSEDV.

The Peptidase S30 domain maps to 165–308 (RMSEASLQLF…KEQSNEIVHY (144 aa)). Residues His-216, Asp-225, and Ser-259 each act as for P1 proteinase activity in the active site. An Involved in interaction with stylet and aphid transmission motif is present at residues 360–363 (KITC). Positions 618 to 620 (PTK) match the Involved in virions binding and aphid transmission motif. Residues 644–766 (MFIAKAGYCY…DSSMKTYLVG (123 aa)) enclose the Peptidase C6 domain. Residues Cys-652 and His-725 each act as for helper component proteinase activity in the active site.

Belongs to the potyviridae P3N-PIPO polyprotein family. Interacts (via PIPO domain) with host PCaP1 protein; this interaction may help to anchor the movement complex to the plasma membrane from which the complex could move to the plasmodesmata. Post-translationally, potyviral RNA is expressed as two polyproteins which undergo post-translational proteolytic processing. Genome polyprotein is processed by NIa-pro, P1 and HC-pro proteinases resulting in the production of at least ten individual proteins. P3N-PIPO is cleaved by P1 and HC-pro proteinases resulting in the production of three individual proteins. The P1 proteinase and the HC-pro cleave only their respective C-termini autocatalytically.

Its subcellular location is the host cell junction. It localises to the host plasmodesma. It carries out the reaction Hydrolyzes a Gly-|-Gly bond at its own C-terminus, commonly in the sequence -Tyr-Xaa-Val-Gly-|-Gly, in the processing of the potyviral polyprotein.. Functionally, required for aphid transmission and also has proteolytic activity. Only cleaves a Gly-Gly dipeptide at its own C-terminus. Interacts with virions and aphid stylets. Acts as a suppressor of RNA-mediated gene silencing, also known as post-transcriptional gene silencing (PTGS), a mechanism of plant viral defense that limits the accumulation of viral RNAs. May have RNA-binding activity. In terms of biological role, allows efficient cell to cell propagation, by bypassing the host cell wall barrier. Transports viral genome to neighboring plant cells directly through plasmosdesmata, without any budding. This Prunus armeniaca (Apricot) protein is P3N-PIPO polyprotein.